The chain runs to 1066 residues: MEQEIDQIVQAITIASDPTQASLYQQALAYISTIQQNANETWRLALHIFVDQNTEGHRKHPAQARFFALRVLDEFFDNRFEPLDHESFQAIHQALTAYIQSEYVVGSAEADASFLRNKFSHTLTLFFLCTYIDQWPSFFTDLFTLIRPTESATRSNFNRHISLLFFHIVLEISGEVADQIIKSARPYNAARHARDARVRDAVRDRDAARINAAVLTIVVEGAEQMANLHKSETSSRGPRELEGAVEVVDWGIRTFGSYVGWIDINLTVTPTTVPLLFNLLADSSLPIRLATSVSLLRIVSKGLKEPGDKLQLLKVLSLGQVLDALEAKTRAQQIEREESYREALGKLLNVLGLELAKLVDDCSDEDIRAEASTYITQIQPVMLRFMADEYDDTCSTVFPLLQNILTTYKRHRKISSNPLDESKRSFLASLLQVLLAKMKWEEDADPEDADEDDNAEFDKMRKELRTFLDSILAIDQVLVTDAVKTLALDTITAFKNGVSIKWNDAELGVYLVFIFGEINKSMTRIAGGKGRAAFCQAPAVVDKDKRKATDYSDYPLTTHGEMLLALVQSGVASFPHRTVSLQFFETASRYTDFFKIRKDCIIPTLEAMIDTRGLHNENLNFRSRLFYLFHRFIKESRNEIPPHISGNIIDSMRDLLLIEVEIPAAEDTEIDPLSEAIKNSQFDSQLYLFETAGILTSLLCKTPTQQTAMLLSLVKPLMDDLSVSLQAFSKGGQDLLPIVKVHHIIMALGNIAKGFPDYPTSIPEGHILPPLEIFTEVAQAILVCLEAMNVYKPIRDATRFAFARILATTGPTVTSYIPQLMGNLLAHFEPTELVDFMNFIGLLIHKLQKDMFDVLDQLIGPLSAHITSLLTQPVSGTDEHRAHIETKRAYLALLNNIMASKLDGIFTSERNSSNFEVLLESMQRLAEDVSDPASEKTAIMFLNRSVTVWGQPSSSENGRETGHGLPGFERFIYERLVQTCFRVPSLPQFNLKDGQMMVVLHEIANLLQVICKIRGHEAYNFFISVFLPSQNWPSETALDFMTKLRDLDGKGFRKYFTELIRSSRTS.

This sequence belongs to the exportin family.

The protein localises to the nucleus. It is found in the cytoplasm. TRNA nucleus export receptor which facilitates tRNA translocation across the nuclear pore complex. Involved in pre-tRNA splicing, probably by affecting the interaction of pre-tRNA with splicing endonuclease. This is Exportin-T (LOS1) from Laccaria bicolor (strain S238N-H82 / ATCC MYA-4686) (Bicoloured deceiver).